Reading from the N-terminus, the 421-residue chain is Testin (421 aa).

The region spanning 92 to 199 is the PET domain; the sequence is MILTNPVAAK…GDVKLPCEMD (108 aa). Residues 133–164 form a disordered region; it reads EKQPVAGSEGAQYRKKQLAKQLPAHDQDPSKC. The segment covering 155-164 has biased composition (basic and acidic residues); that stretch reads PAHDQDPSKC. 3 LIM zinc-binding domains span residues 234 to 297, 299 to 359, and 362 to 421; these read YSCY…CDSE, PRCA…NHAV, and QGCH…KMMS.

Belongs to the prickle / espinas / testin family. Interacts via LIM domain 1 with ZYX. Interacts (via LIM domain 3) with ENAH and VASP. Interacts with ALKBH4, talin, actin, alpha-actinin, GRIP1 and PXN. Interacts (via LIM domain 2) with ACTL7A (via N-terminus). Heterodimer with ACTL7A; the heterodimer interacts with ENAH to form a heterotrimer.

The protein localises to the cytoplasm. It localises to the cell junction. It is found in the focal adhesion. Its function is as follows. Scaffold protein that may play a role in cell adhesion, cell spreading and in the reorganization of the actin cytoskeleton. Plays a role in the regulation of cell proliferation. May act as a tumor suppressor. In Aotus nancymaae (Ma's night monkey), this protein is Testin (TES).